A 243-amino-acid polypeptide reads, in one-letter code: Adenosylcobinamide-GDP ribazoletransferase (243 aa).

Helical transmembrane passes span 31-51 (LLFYPLVGAVFGTLLLGFNTL), 55-75 (APLMLHAALVLTAWVLLSGGL), 109-129 (IAVVTLVLVLLLKFAAILALI), 133-153 (ASVWLLLAPVIGRAAMLGLFL), and 188-208 (VLLAGWSGVAVLLVCAVCFFW).

The protein belongs to the CobS family. Mg(2+) serves as cofactor.

Its subcellular location is the cell inner membrane. The catalysed reaction is alpha-ribazole + adenosylcob(III)inamide-GDP = adenosylcob(III)alamin + GMP + H(+). The enzyme catalyses alpha-ribazole 5'-phosphate + adenosylcob(III)inamide-GDP = adenosylcob(III)alamin 5'-phosphate + GMP + H(+). Its pathway is cofactor biosynthesis; adenosylcobalamin biosynthesis; adenosylcobalamin from cob(II)yrinate a,c-diamide: step 7/7. Its function is as follows. Joins adenosylcobinamide-GDP and alpha-ribazole to generate adenosylcobalamin (Ado-cobalamin). Also synthesizes adenosylcobalamin 5'-phosphate from adenosylcobinamide-GDP and alpha-ribazole 5'-phosphate. The chain is Adenosylcobinamide-GDP ribazoletransferase from Pseudomonas syringae pv. syringae (strain B728a).